A 370-amino-acid polypeptide reads, in one-letter code: Probable endopolygalacturonase A (370 aa).

Residues 1-19 (MPSAKPLFCLATLAGAALA) form the signal peptide. A propeptide spanning residues 20–32 (APAPSRATDFNKR) is cleaved from the precursor. The cysteines at positions 35 and 50 are disulfide-linked. PbH1 repeat units follow at residues 162–192 (SDNLVIEDVTIDNSDGDSEGGHNTDGFDISE), 193–214 (STYITITGATVKNQDDCVAINS), 215–235 (GENIYFSGGTCSGGHGLSIGS), 244–265 (VKNVTFIDSTVSDSENGVRIKT), 273–295 (VEDITYSNIQLSGISDYGIVIEQ), and 307–352 (SNGV…DITG). Asp-207 acts as the Proton donor in catalysis. Cysteines 209 and 225 form a disulfide. The active site involves His-229. An N-linked (GlcNAc...) asparagine glycan is attached at Asn-246. 2 disulfide bridges follow: Cys-335-Cys-340 and Cys-359-Cys-368.

It belongs to the glycosyl hydrolase 28 family.

It localises to the secreted. It carries out the reaction (1,4-alpha-D-galacturonosyl)n+m + H2O = (1,4-alpha-D-galacturonosyl)n + (1,4-alpha-D-galacturonosyl)m.. In terms of biological role, involved in maceration and soft-rotting of plant tissue. Hydrolyzes the 1,4-alpha glycosidic bonds of de-esterified pectate in the smooth region of the plant cell wall. The polypeptide is Probable endopolygalacturonase A (pgaA) (Aspergillus kawachii (strain NBRC 4308) (White koji mold)).